We begin with the raw amino-acid sequence, 277 residues long: Methylglyoxal reductase DkgA (277 aa).

Tyrosine 51 (proton donor) is an active-site residue. Histidine 107 contacts substrate. Serine 187–asparagine 241 is an NADP(+) binding site.

It belongs to the aldo/keto reductase family. As to quaternary structure, monomer.

Its subcellular location is the cytoplasm. The enzyme catalyses hydroxyacetone + NADP(+) = methylglyoxal + NADPH + H(+). Aldo-keto reductase that significantly contributes to cellular methylglyoxal detoxification by catalyzing the NADPH-dependent conversion of methylglyoxal to acetol. The polypeptide is Methylglyoxal reductase DkgA (Yersinia pestis).